The chain runs to 190 residues: UPF0301 protein PSPPH_0476 (190 aa).

Belongs to the UPF0301 (AlgH) family.

In Pseudomonas savastanoi pv. phaseolicola (strain 1448A / Race 6) (Pseudomonas syringae pv. phaseolicola (strain 1448A / Race 6)), this protein is UPF0301 protein PSPPH_0476.